We begin with the raw amino-acid sequence, 282 residues long: Rhomboid protease GlpG (282 aa).

6 consecutive transmembrane segments (helical) span residues 96 to 116 (AGPLTLTILLLNIVVYLWMQF), 144 to 164 (GLLHFSLLHIIFNLMWWWYLG), 176 to 196 (LFVIMIVSAVFSGWGQSLFSG), 197 to 217 (SHFGGLSGVVYALIGYVWLTG), 225 to 242 (IGVPRGLMAFSLFWLIVG), and 247 to 269 (FGLSIANAAHFSGLIIGLLMALW). Ser-203 serves as the catalytic Nucleophile. His-256 is an active-site residue.

This sequence belongs to the peptidase S54 family.

It is found in the cell inner membrane. It catalyses the reaction Cleaves type-1 transmembrane domains using a catalytic dyad composed of serine and histidine that are contributed by different transmembrane domains.. Rhomboid-type serine protease that catalyzes intramembrane proteolysis. The sequence is that of Rhomboid protease GlpG from Photorhabdus laumondii subsp. laumondii (strain DSM 15139 / CIP 105565 / TT01) (Photorhabdus luminescens subsp. laumondii).